Here is a 387-residue protein sequence, read N- to C-terminus: Sulfoacetaldehyde reductase (387 aa).

The protein belongs to the iron-containing alcohol dehydrogenase family.

The enzyme catalyses 2-hydroxyethane-1-sulfonate + NAD(+) = sulfoacetaldehyde + NADH + H(+). The protein operates within organosulfur degradation; alkanesulfonate degradation. In terms of biological role, involved in an anaerobic respiration pathway that converts the sulfonate taurine (2-aminoethanesulfonate) to ammonia, acetate and sulfide. Catalyzes the NADH-dependent reduction of sulfoacetaldehyde to 2-hydroxyethane-1-sulfonate (isethionate). Does not accept acetaldehyde as a substrate. The chain is Sulfoacetaldehyde reductase from Bilophila wadsworthia (strain 3_1_6).